A 408-amino-acid polypeptide reads, in one-letter code: Arginine biosynthesis bifunctional protein ArgJ (408 aa).

Residues Thr-158, Lys-184, Thr-195, Glu-281, Asn-403, and Thr-408 each coordinate substrate. Residue Thr-195 is the Nucleophile of the active site.

This sequence belongs to the ArgJ family. Heterotetramer of two alpha and two beta chains.

The protein resides in the cytoplasm. The enzyme catalyses N(2)-acetyl-L-ornithine + L-glutamate = N-acetyl-L-glutamate + L-ornithine. It carries out the reaction L-glutamate + acetyl-CoA = N-acetyl-L-glutamate + CoA + H(+). It functions in the pathway amino-acid biosynthesis; L-arginine biosynthesis; L-ornithine and N-acetyl-L-glutamate from L-glutamate and N(2)-acetyl-L-ornithine (cyclic): step 1/1. Its pathway is amino-acid biosynthesis; L-arginine biosynthesis; N(2)-acetyl-L-ornithine from L-glutamate: step 1/4. Its function is as follows. Catalyzes two activities which are involved in the cyclic version of arginine biosynthesis: the synthesis of N-acetylglutamate from glutamate and acetyl-CoA as the acetyl donor, and of ornithine by transacetylation between N(2)-acetylornithine and glutamate. This is Arginine biosynthesis bifunctional protein ArgJ from Bacillus cereus (strain ATCC 14579 / DSM 31 / CCUG 7414 / JCM 2152 / NBRC 15305 / NCIMB 9373 / NCTC 2599 / NRRL B-3711).